Consider the following 175-residue polypeptide: Bifunctional protein PyrR (175 aa).

Substrate is bound by residues 40 to 41 (TR), 102 to 110 (DDVLYTGRT), Arg-135, and Val-159. The PRPP-binding signature appears at 98–110 (VIIIDDVLYTGRT).

This sequence belongs to the purine/pyrimidine phosphoribosyltransferase family. PyrR subfamily. Homodimer and homohexamer; in equilibrium.

It catalyses the reaction UMP + diphosphate = 5-phospho-alpha-D-ribose 1-diphosphate + uracil. Regulates transcriptional attenuation of the pyrimidine nucleotide (pyr) operon by binding in a uridine-dependent manner to specific sites on pyr mRNA. This disrupts an antiterminator hairpin in the RNA and favors formation of a downstream transcription terminator, leading to a reduced expression of downstream genes. In terms of biological role, also displays a weak uracil phosphoribosyltransferase activity which is not physiologically significant. In Staphylococcus haemolyticus (strain JCSC1435), this protein is Bifunctional protein PyrR.